Here is a 154-residue protein sequence, read N- to C-terminus: UPF0039 protein sll0451 (154 aa).

Positions 8-151 constitute an N-acetyltransferase domain; it reads QRFNDISGEA…EHISMIFRVP (144 aa).

Belongs to the UPF0039 (ElaA) family.

The polypeptide is UPF0039 protein sll0451 (Synechocystis sp. (strain ATCC 27184 / PCC 6803 / Kazusa)).